The chain runs to 1323 residues: ABC transporter C family member 12 (1323 aa).

In terms of domain architecture, ABC transmembrane type-1 1 spans histidine 110 to glutamine 396. 6 consecutive transmembrane segments (helical) span residues cysteine 111–leucine 131, methionine 152–tyrosine 172, valine 227–leucine 247, isoleucine 252–leucine 272, isoleucine 338–tyrosine 358, and serine 375–isoleucine 395. In terms of domain architecture, ABC transporter 1 spans valine 428–glutamate 652. Glycine 464–serine 471 serves as a coordination point for ATP. The disordered stretch occupies residues glutamate 657–glutamate 695. A compositionally biased stretch (basic and acidic residues) spans aspartate 672–glycine 690. Helical transmembrane passes span valine 712–glycine 732, isoleucine 772–phenylalanine 792, leucine 840–isoleucine 860, isoleucine 862–isoleucine 882, and tryptophan 952–isoleucine 972. The ABC transmembrane type-1 2 domain maps to phenylalanine 720–threonine 1010. In terms of domain architecture, ABC transporter 2 spans isoleucine 1047–asparagine 1281. Glycine 1081–serine 1088 is an ATP binding site.

The protein belongs to the ABC transporter superfamily. ABCC family. Conjugate transporter (TC 3.A.1.208) subfamily.

It is found in the membrane. The protein is ABC transporter C family member 12 (abcC12) of Dictyostelium discoideum (Social amoeba).